The chain runs to 489 residues: Male-specific lethal 1-like 1 (489 aa).

Disordered regions lie at residues 126-164 (PMVS…VRKG) and 224-311 (VKKD…EDMQ). Residues 179–227 (LLLQLELIEQQQKHLHNKNKEIEDLKAEKEMLMARIERMEHRLQMVKKD) are a coiled coil. A PEHE domain is found at 347–466 (TVEVPSWRES…LKQQDFDLPW (120 aa)). The interval 371 to 389 (ECLDDSVFLKRHSKLELDE) is interaction with KAT8 HAT domain. The Bipartite nuclear localization signal motif lies at 380-394 (KRHSKLELDEKRRKR).

It belongs to the msl-1 family. Component of a multisubunit histone acetyltransferase complex (MSL). Interacts (via PEHE domain) with KAT8 (via HAT domain) and MSL3 (via MRG domain); both interactions are direct.

It localises to the nucleus. The protein localises to the nucleoplasm. It is found in the nucleus speckle. Functionally, component of histone acetyltransferase complex. Within MSL complex, promotes ubiquitination of histone H2B. This is Male-specific lethal 1-like 1 (msl1l1) from Danio rerio (Zebrafish).